The primary structure comprises 195 residues: NAD(P)H-quinone oxidoreductase subunit J, chloroplastic (195 aa).

Belongs to the complex I 30 kDa subunit family. As to quaternary structure, NDH is composed of at least 16 different subunits, 5 of which are encoded in the nucleus.

It localises to the plastid. It is found in the chloroplast thylakoid membrane. It carries out the reaction a plastoquinone + NADH + (n+1) H(+)(in) = a plastoquinol + NAD(+) + n H(+)(out). The enzyme catalyses a plastoquinone + NADPH + (n+1) H(+)(in) = a plastoquinol + NADP(+) + n H(+)(out). Functionally, NDH shuttles electrons from NAD(P)H:plastoquinone, via FMN and iron-sulfur (Fe-S) centers, to quinones in the photosynthetic chain and possibly in a chloroplast respiratory chain. The immediate electron acceptor for the enzyme in this species is believed to be plastoquinone. Couples the redox reaction to proton translocation, and thus conserves the redox energy in a proton gradient. The chain is NAD(P)H-quinone oxidoreductase subunit J, chloroplastic from Chlorokybus atmophyticus (Soil alga).